A 259-amino-acid polypeptide reads, in one-letter code: Glutamate 5-kinase (259 aa).

Position 18 (Lys-18) interacts with ATP. Substrate-binding residues include Ser-54, Asp-141, and Asn-153. 173–174 (SD) provides a ligand contact to ATP.

Belongs to the glutamate 5-kinase family.

It localises to the cytoplasm. The catalysed reaction is L-glutamate + ATP = L-glutamyl 5-phosphate + ADP. It functions in the pathway amino-acid biosynthesis; L-proline biosynthesis; L-glutamate 5-semialdehyde from L-glutamate: step 1/2. Functionally, catalyzes the transfer of a phosphate group to glutamate to form L-glutamate 5-phosphate. The sequence is that of Glutamate 5-kinase from Clavibacter michiganensis subsp. michiganensis (strain NCPPB 382).